The sequence spans 445 residues: Glutamate--tRNA ligase 1 (445 aa).

The short motif at 9–19 (PSPTGYLHVGN) is the 'HIGH' region element. Positions 238 to 242 (KISKR) match the 'KMSKS' region motif. An ATP-binding site is contributed by lysine 241.

It belongs to the class-I aminoacyl-tRNA synthetase family. Glutamate--tRNA ligase type 1 subfamily. In terms of assembly, monomer.

The protein localises to the cytoplasm. The enzyme catalyses tRNA(Glu) + L-glutamate + ATP = L-glutamyl-tRNA(Glu) + AMP + diphosphate. Catalyzes the attachment of glutamate to tRNA(Glu) in a two-step reaction: glutamate is first activated by ATP to form Glu-AMP and then transferred to the acceptor end of tRNA(Glu). The protein is Glutamate--tRNA ligase 1 of Ehrlichia ruminantium (strain Gardel).